Here is a 104-residue protein sequence, read N- to C-terminus: Flagellar hook-basal body complex protein FliE (104 aa).

The protein belongs to the FliE family.

It is found in the bacterial flagellum basal body. In Escherichia coli O139:H28 (strain E24377A / ETEC), this protein is Flagellar hook-basal body complex protein FliE.